Reading from the N-terminus, the 59-residue chain is MAVQQNKKSPSKRGMHRSHDALTAPALFVDSTTGEVHRPHHISPNGMYRGRKVVKAKGE.

The tract at residues 1 to 59 (MAVQQNKKSPSKRGMHRSHDALTAPALFVDSTTGEVHRPHHISPNGMYRGRKVVKAKGE) is disordered. A compositionally biased stretch (basic residues) spans 49–59 (RGRKVVKAKGE).

This sequence belongs to the bacterial ribosomal protein bL32 family.

This Neisseria gonorrhoeae (strain ATCC 700825 / FA 1090) protein is Large ribosomal subunit protein bL32.